Reading from the N-terminus, the 504-residue chain is Maturase K (504 aa).

It belongs to the intron maturase 2 family. MatK subfamily.

It is found in the plastid. The protein localises to the chloroplast. Its function is as follows. Usually encoded in the trnK tRNA gene intron. Probably assists in splicing its own and other chloroplast group II introns. In Capsella bursa-pastoris (Shepherd's purse), this protein is Maturase K.